Here is a 403-residue protein sequence, read N- to C-terminus: Dual-specificity RNA methyltransferase RlmN (403 aa).

Glutamate 126 functions as the Proton acceptor in the catalytic mechanism. The 244-residue stretch at 132 to 375 (ETDRGTLCVS…VRTPRGRDIL (244 aa)) folds into the Radical SAM core domain. The cysteines at positions 139 and 378 are disulfide-linked. The [4Fe-4S] cluster site is built by cysteine 146, cysteine 150, and cysteine 153. S-adenosyl-L-methionine contacts are provided by residues 204 to 205 (GE), serine 236, 258 to 260 (SLH), and asparagine 335. Cysteine 378 functions as the S-methylcysteine intermediate in the catalytic mechanism.

This sequence belongs to the radical SAM superfamily. RlmN family. Requires [4Fe-4S] cluster as cofactor.

The protein resides in the cytoplasm. The catalysed reaction is adenosine(2503) in 23S rRNA + 2 reduced [2Fe-2S]-[ferredoxin] + 2 S-adenosyl-L-methionine = 2-methyladenosine(2503) in 23S rRNA + 5'-deoxyadenosine + L-methionine + 2 oxidized [2Fe-2S]-[ferredoxin] + S-adenosyl-L-homocysteine. It carries out the reaction adenosine(37) in tRNA + 2 reduced [2Fe-2S]-[ferredoxin] + 2 S-adenosyl-L-methionine = 2-methyladenosine(37) in tRNA + 5'-deoxyadenosine + L-methionine + 2 oxidized [2Fe-2S]-[ferredoxin] + S-adenosyl-L-homocysteine. Its function is as follows. Specifically methylates position 2 of adenine 2503 in 23S rRNA and position 2 of adenine 37 in tRNAs. m2A2503 modification seems to play a crucial role in the proofreading step occurring at the peptidyl transferase center and thus would serve to optimize ribosomal fidelity. This Bradyrhizobium sp. (strain ORS 278) protein is Dual-specificity RNA methyltransferase RlmN.